An 87-amino-acid polypeptide reads, in one-letter code: Phosphoribosyl-ATP pyrophosphatase (87 aa).

This sequence belongs to the PRA-PH family.

It localises to the cytoplasm. The enzyme catalyses 1-(5-phospho-beta-D-ribosyl)-ATP + H2O = 1-(5-phospho-beta-D-ribosyl)-5'-AMP + diphosphate + H(+). Its pathway is amino-acid biosynthesis; L-histidine biosynthesis; L-histidine from 5-phospho-alpha-D-ribose 1-diphosphate: step 2/9. The chain is Phosphoribosyl-ATP pyrophosphatase from Arthrobacter sp. (strain FB24).